Consider the following 1441-residue polypeptide: Envelopment polyprotein (1441 aa).

The first 13 residues, 1-13 (MIRMLVLIVVTAA), serve as a signal peptide directing secretion. At 14-200 (SPVYQRCFQD…GSIANSICQN (187 aa)) the chain is on the lumenal side. Residue asparagine 57 is glycosylated (N-linked (GlcNAc...) asparagine; by host). A helical transmembrane segment spans residues 201–221 (IEIIILVTLTLLIFILLSILS). The Cytoplasmic portion of the chain corresponds to 222-305 (KTYICYLLMP…RAARVMCKSK (84 aa)). A helical membrane pass occupies residues 306–326 (GPASILSIITAVLVLTFVTPI). Residues 327–365 (NSMVLGESKETFELEELPDDMLEMALRINSYYFTCILNY) lie on the Lumenal side of the membrane. The chain crosses the membrane as a helical span at residues 366-386 (AVSWGLIIAGLLVGLIFKKYQ). Topologically, residues 387–452 (HRFLNIYAMY…LVQYKAKWMM (66 aa)) are cytoplasmic. The helical transmembrane segment at 453–473 (NFLIIYIFLILIKDSAIVGQA) threads the bilayer. Residues 474-1395 (TGTDFTTCLE…EPFKNLFGSY (922 aa)) are Lumenal-facing. N-linked (GlcNAc...) asparagine; by host glycans are attached at residues asparagine 490 and asparagine 1177. The helical transmembrane segment at 1396–1416 (IGIFYTFIISIIALLVIIYVL) threads the bilayer. Over 1417 to 1441 (LPICFKLRDTLRKHDDAYKREMKIR) the chain is Cytoplasmic.

The protein belongs to the orthobunyavirus envelope glycoprotein family. In terms of assembly, glycoprotein C and Glycoprotein N interact with each other. Specific enzymatic cleavages in vivo yield mature proteins including nonstructural protein NSm, glycoprotein C, and glycoprotein N.

It localises to the virion membrane. It is found in the host Golgi apparatus membrane. Its subcellular location is the host endoplasmic reticulum membrane. Functionally, glycoprotein C and Glycoprotein N interact with each other and are present at the surface of the virion. They are able to attach the virion to a cell receptor and to promote fusion of membranes after endocytosis of the virion. The polypeptide is Envelopment polyprotein (GP) (Bunyavirus La Crosse).